A 207-amino-acid polypeptide reads, in one-letter code: Ribonuclease HII (207 aa).

The RNase H type-2 domain maps to 18–207; it reads TYLSGSDEAG…PIKKISKETS (190 aa). A divalent metal cation is bound by residues Asp-24, Glu-25, and Asp-116.

Belongs to the RNase HII family. It depends on Mn(2+) as a cofactor. The cofactor is Mg(2+).

Its subcellular location is the cytoplasm. It carries out the reaction Endonucleolytic cleavage to 5'-phosphomonoester.. In terms of biological role, endonuclease that specifically degrades the RNA of RNA-DNA hybrids. This is Ribonuclease HII from Mycoplasma capricolum subsp. capricolum (strain California kid / ATCC 27343 / NCTC 10154).